The following is an 832-amino-acid chain: Beta-galactosidase (832 aa).

Residues Met1–Ala25 form the signal peptide. Glu183 (proton donor) is an active-site residue. Catalysis depends on Glu252, which acts as the Nucleophile. The SUEL-type lectin domain maps to Ala741–Glu832.

The protein belongs to the glycosyl hydrolase 35 family.

The protein resides in the secreted. It is found in the extracellular space. It localises to the apoplast. The catalysed reaction is Hydrolysis of terminal non-reducing beta-D-galactose residues in beta-D-galactosides.. The sequence is that of Beta-galactosidase from Asparagus officinalis (Garden asparagus).